The chain runs to 440 residues: Alpha-methylserine aldolase (440 aa).

Position 255 is an N6-(pyridoxal phosphate)lysine (K255).

This sequence belongs to the SHMT family. Alpha-methylserine aldolase subfamily. In terms of assembly, homodimer. Pyridoxal 5'-phosphate serves as cofactor.

The catalysed reaction is 2-methyl-L-serine = formaldehyde + L-alanine. It carries out the reaction 2-ethyl-L-serine = (2S)-2-aminobutanoate + formaldehyde. In the alpha-methyl-L-serine synthesis reaction, activity is inhibited by an excess amount of formaldehyde (at a concentration greater than 4 mM). Formaldehyde release activity is reduced by the sulfhydryl reagent N-ethylmaleimide, iodoacetate amide and iodoacetic acid, but not by dithiothreitol and 2-mercaptoethanol. Activity is enhanced by 1 mM of manganese chloride. Functionally, catalyzes the reversible interconversion of alpha-methyl-L-serine to L-alanine and formaldehyde. Can also catalyze the synthesis of alpha-ethyl-L-serine from L-2-aminobutyric acid and formaldehyde. Also shows low alanine racemase activity. Cannot use alpha-methyl-D-serine, L-serine, D-serine, (S)-2-amino-1-propanol, (R)-2-amino-1-propanol, (S)-alpha-hydroxymethyltyrosine, (R)-alpha-hydroxymethyltyrosine, alpha-iso-butyl-DL-serine, alpha-iso-propyl-DL-serine or alpha-benzyl-DL-serine. Cannot use D-alanine instead of L-alanine as the substrate for alpha-methyl-L-serine synthesis. Does not require tetrahydrofolate (THF) for activity. The sequence is that of Alpha-methylserine aldolase from Variovorax paradoxus.